We begin with the raw amino-acid sequence, 212 residues long: Imidazole glycerol phosphate synthase subunit HisH (212 aa).

The Glutamine amidotransferase type-1 domain occupies glutamine 2–tryptophan 212. Catalysis depends on cysteine 85, which acts as the Nucleophile. Active-site residues include histidine 194 and glutamate 196.

In terms of assembly, heterodimer of HisH and HisF.

It is found in the cytoplasm. It carries out the reaction 5-[(5-phospho-1-deoxy-D-ribulos-1-ylimino)methylamino]-1-(5-phospho-beta-D-ribosyl)imidazole-4-carboxamide + L-glutamine = D-erythro-1-(imidazol-4-yl)glycerol 3-phosphate + 5-amino-1-(5-phospho-beta-D-ribosyl)imidazole-4-carboxamide + L-glutamate + H(+). It catalyses the reaction L-glutamine + H2O = L-glutamate + NH4(+). It functions in the pathway amino-acid biosynthesis; L-histidine biosynthesis; L-histidine from 5-phospho-alpha-D-ribose 1-diphosphate: step 5/9. Its function is as follows. IGPS catalyzes the conversion of PRFAR and glutamine to IGP, AICAR and glutamate. The HisH subunit catalyzes the hydrolysis of glutamine to glutamate and ammonia as part of the synthesis of IGP and AICAR. The resulting ammonia molecule is channeled to the active site of HisF. This chain is Imidazole glycerol phosphate synthase subunit HisH, found in Neisseria gonorrhoeae (strain ATCC 700825 / FA 1090).